We begin with the raw amino-acid sequence, 110 residues long: UPF0122 protein gbs1018 (110 aa).

The protein belongs to the UPF0122 family.

Its function is as follows. Might take part in the signal recognition particle (SRP) pathway. This is inferred from the conservation of its genetic proximity to ftsY/ffh. May be a regulatory protein. The polypeptide is UPF0122 protein gbs1018 (Streptococcus agalactiae serotype III (strain NEM316)).